A 252-amino-acid polypeptide reads, in one-letter code: Imidazole glycerol phosphate synthase subunit HisF (252 aa).

Active-site residues include Asp-11 and Asp-130.

Belongs to the HisA/HisF family. As to quaternary structure, heterodimer of HisH and HisF.

The protein localises to the cytoplasm. The catalysed reaction is 5-[(5-phospho-1-deoxy-D-ribulos-1-ylimino)methylamino]-1-(5-phospho-beta-D-ribosyl)imidazole-4-carboxamide + L-glutamine = D-erythro-1-(imidazol-4-yl)glycerol 3-phosphate + 5-amino-1-(5-phospho-beta-D-ribosyl)imidazole-4-carboxamide + L-glutamate + H(+). The protein operates within amino-acid biosynthesis; L-histidine biosynthesis; L-histidine from 5-phospho-alpha-D-ribose 1-diphosphate: step 5/9. Functionally, IGPS catalyzes the conversion of PRFAR and glutamine to IGP, AICAR and glutamate. The HisF subunit catalyzes the cyclization activity that produces IGP and AICAR from PRFAR using the ammonia provided by the HisH subunit. In Paramagnetospirillum magneticum (strain ATCC 700264 / AMB-1) (Magnetospirillum magneticum), this protein is Imidazole glycerol phosphate synthase subunit HisF.